A 258-amino-acid polypeptide reads, in one-letter code: Phycoerythrobilin:ferredoxin oxidoreductase (258 aa).

It belongs to the HY2 family.

The enzyme catalyses (3Z)-phycoerythrobilin + oxidized 2[4Fe-4S]-[ferredoxin] = 15,16-dihydrobiliverdin + reduced 2[4Fe-4S]-[ferredoxin] + 2 H(+). Functionally, catalyzes the two-electron reduction of the C2 and C3(1) diene system of 15,16-dihydrobiliverdin. This chain is Phycoerythrobilin:ferredoxin oxidoreductase, found in Prochlorococcus marinus (strain NATL1A).